The chain runs to 98 residues: Large ribosomal subunit protein uL23 (98 aa).

It belongs to the universal ribosomal protein uL23 family. In terms of assembly, part of the 50S ribosomal subunit. Contacts protein L29, and trigger factor when it is bound to the ribosome.

Functionally, one of the early assembly proteins it binds 23S rRNA. One of the proteins that surrounds the polypeptide exit tunnel on the outside of the ribosome. Forms the main docking site for trigger factor binding to the ribosome. The chain is Large ribosomal subunit protein uL23 from Lactobacillus gasseri (strain ATCC 33323 / DSM 20243 / BCRC 14619 / CIP 102991 / JCM 1131 / KCTC 3163 / NCIMB 11718 / NCTC 13722 / AM63).